Consider the following 554-residue polypeptide: Putative acyl-coenzyme A synthetase (554 aa).

195 to 206 (LLYSSGTTGPPK) contributes to the AMP binding site.

This sequence belongs to the ATP-dependent AMP-binding enzyme family.

In Emericella nidulans (strain FGSC A4 / ATCC 38163 / CBS 112.46 / NRRL 194 / M139) (Aspergillus nidulans), this protein is Putative acyl-coenzyme A synthetase.